A 452-amino-acid polypeptide reads, in one-letter code: UDP-N-acetylmuramoylalanine--D-glutamate ligase (452 aa).

115–121 contacts ATP; sequence GTNGKTT.

This sequence belongs to the MurCDEF family.

Its subcellular location is the cytoplasm. It carries out the reaction UDP-N-acetyl-alpha-D-muramoyl-L-alanine + D-glutamate + ATP = UDP-N-acetyl-alpha-D-muramoyl-L-alanyl-D-glutamate + ADP + phosphate + H(+). The protein operates within cell wall biogenesis; peptidoglycan biosynthesis. Its function is as follows. Cell wall formation. Catalyzes the addition of glutamate to the nucleotide precursor UDP-N-acetylmuramoyl-L-alanine (UMA). In Elusimicrobium minutum (strain Pei191), this protein is UDP-N-acetylmuramoylalanine--D-glutamate ligase.